Consider the following 297-residue polypeptide: uncharacterized protein (297 aa).

6 consecutive transmembrane segments (helical) span residues 26 to 48 (FVLHGLSVIAVSIATLLSAIYAI), 80 to 102 (NIELLGVTFVFGLVIVAALAALF), 134 to 156 (LFKFELILTLLIGIAFIPLINLG), 185 to 205 (LGIFAITIQFLFTFVPYAIVI), 225 to 247 (LVDTIIMWLLVGLAGMALQVAAY), and 262 to 284 (LVAVILGWVAVMPITTCWWVELY).

The protein resides in the cell membrane. This is an uncharacterized protein from Archaeoglobus fulgidus (strain ATCC 49558 / DSM 4304 / JCM 9628 / NBRC 100126 / VC-16).